The primary structure comprises 427 residues: MNFYVEVLGCPKNEADCALLKSHLRKMGNNIVDNLSDADAVIIDTCGFILDAKKESIEEILSYVEYKKGKNLKVFVTGCLVQRFGKELKKEIPEVDGWFGVLPPKEIATHIGKRNVIPEVPEPVYNFEGRVDNGQYAYVKISDGCDRACSFCTIPLFKGSFKSRKIDDILKEIEFLIERKIKEIILVAQDTTGYGIDIYRKQMLPELLKRINDLSGDFWVRVMYMHPDHITDDIIEAFSYDKVLKYFDIPVQNGSDKILKLMNRSRKTRQLYSLFEKIRNFYSDAILRTSIIVGFPGETRKDFDETLKFIKEVKFDRLGAFIYSDEEEASSFSLSGKVPREIAEERLEELMDIQSQISFEKNEKLVGKKLKVLFDEEEDGVLIGRSYMDAPEIDANVFVRGEFKKGFFDVKITSADIYDLEGEIVEE.

In terms of domain architecture, MTTase N-terminal spans 1–116; the sequence is MNFYVEVLGC…IATHIGKRNV (116 aa). [4Fe-4S] cluster contacts are provided by Cys-10, Cys-46, Cys-79, Cys-145, Cys-149, and Cys-152. A Radical SAM core domain is found at 131–360; it reads VDNGQYAYVK…MDIQSQISFE (230 aa). In terms of domain architecture, TRAM spans 363 to 426; it reads EKLVGKKLKV…IYDLEGEIVE (64 aa).

The protein belongs to the methylthiotransferase family. RimO subfamily. It depends on [4Fe-4S] cluster as a cofactor.

The protein resides in the cytoplasm. It catalyses the reaction L-aspartate(89)-[ribosomal protein uS12]-hydrogen + (sulfur carrier)-SH + AH2 + 2 S-adenosyl-L-methionine = 3-methylsulfanyl-L-aspartate(89)-[ribosomal protein uS12]-hydrogen + (sulfur carrier)-H + 5'-deoxyadenosine + L-methionine + A + S-adenosyl-L-homocysteine + 2 H(+). Functionally, catalyzes the methylthiolation of an aspartic acid residue of ribosomal protein uS12. This chain is Ribosomal protein uS12 methylthiotransferase RimO, found in Thermosipho melanesiensis (strain DSM 12029 / CIP 104789 / BI429).